The sequence spans 67 residues: ATP synthase F(0) complex subunit 8 (67 aa).

A helical transmembrane segment spans residues 8–24; it reads TWFITIISSMATLFILF. An N6-acetyllysine; alternate modification is found at Lys-54. Lys-54 is modified (N6-succinyllysine; alternate). The residue at position 57 (Lys-57) is an N6-acetyllysine.

The protein belongs to the ATPase protein 8 family. As to quaternary structure, component of the ATP synthase complex composed at least of ATP5F1A/subunit alpha, ATP5F1B/subunit beta, ATP5MC1/subunit c (homooctomer), MT-ATP6/subunit a, MT-ATP8/subunit 8, ATP5ME/subunit e, ATP5MF/subunit f, ATP5MG/subunit g, ATP5MK/subunit k, ATP5MJ/subunit j, ATP5F1C/subunit gamma, ATP5F1D/subunit delta, ATP5F1E/subunit epsilon, ATP5PF/subunit F6, ATP5PB/subunit b, ATP5PD/subunit d, ATP5PO/subunit OSCP. ATP synthase complex consists of a soluble F(1) head domain (subunits alpha(3) and beta(3)) - the catalytic core - and a membrane F(0) domain - the membrane proton channel (subunits c, a, 8, e, f, g, k and j). These two domains are linked by a central stalk (subunits gamma, delta, and epsilon) rotating inside the F1 region and a stationary peripheral stalk (subunits F6, b, d, and OSCP). Interacts with PRICKLE3.

It localises to the mitochondrion membrane. Its function is as follows. Subunit 8, of the mitochondrial membrane ATP synthase complex (F(1)F(0) ATP synthase or Complex V) that produces ATP from ADP in the presence of a proton gradient across the membrane which is generated by electron transport complexes of the respiratory chain. ATP synthase complex consist of a soluble F(1) head domain - the catalytic core - and a membrane F(1) domain - the membrane proton channel. These two domains are linked by a central stalk rotating inside the F(1) region and a stationary peripheral stalk. During catalysis, ATP synthesis in the catalytic domain of F(1) is coupled via a rotary mechanism of the central stalk subunits to proton translocation. In vivo, can only synthesize ATP although its ATP hydrolase activity can be activated artificially in vitro. Part of the complex F(0) domain. The polypeptide is ATP synthase F(0) complex subunit 8 (Rattus norvegicus (Rat)).